Here is a 444-residue protein sequence, read N- to C-terminus: Endothelin-3 receptor (444 aa).

Positions 1–18 (MATVILFVAWMACLMVGV) are cleaved as a signal peptide. Over 19 to 88 (CYQEFQTQQN…SRAKIRHAFK (70 aa)) the chain is Extracellular. N-linked (GlcNAc...) asparagine glycosylation is present at Asn60. Residues 89–113 (YVTTILSCVIFLVGIVGNSTLLRII) traverse the membrane as a helical segment. Residues 114 to 124 (YKNKCMRNGPN) lie on the Cytoplasmic side of the membrane. Residues 125–145 (VLIASLALGDLFYILIAIPII) form a helical membrane-spanning segment. Over 146–161 (SISFWLSTGHSEYIYQ) the chain is Extracellular. The helical transmembrane segment at 162 to 180 (LVHLYRARVYSLSLCALSI) threads the bilayer. The Cytoplasmic segment spans residues 181–201 (DRYRAVASWNRIRSIGIPVRK). Residues 202-226 (AIELTLIWAVAIIVAVPEAIAFNLV) traverse the membrane as a helical segment. Over 227–254 (ELDFRGQTILVCMLPMEQTSDFMRFYQE) the chain is Extracellular. The chain crosses the membrane as a helical span at residues 255–279 (VKVWWLFGFYFCLPLACTGVFYTLM). Residues 280–307 (SCEMLSIKNGMRIALNDHMKQRREVAKT) lie on the Cytoplasmic side of the membrane. Residues 308 to 328 (VFCLVVIFALCWLPLHVSSIF) form a helical membrane-spanning segment. Over 329-365 (VRLSATVKRACILKNKRSCIMAEIQTGVNYQLLMVMN) the chain is Extracellular. A helical transmembrane segment spans residues 366–386 (YTGINMASLNSCIGPVALYFV). The Cytoplasmic segment spans residues 387-444 (SRKFKNCFQSCLCCWCHRPTLTITPMDEKGSGGKWKANGHDLDLDRSSSRLSNKYSSS). The interval 416–444 (GSGGKWKANGHDLDLDRSSSRLSNKYSSS) is disordered. Residues 424–434 (NGHDLDLDRSS) show a composition bias toward basic and acidic residues. Residues 435 to 444 (SRLSNKYSSS) are compositionally biased toward low complexity.

The protein belongs to the G-protein coupled receptor 1 family. Endothelin receptor subfamily.

It is found in the cell membrane. Functionally, receptor for endothelin-3. Mediates its action by association with G proteins that activate a phosphatidylinositol-calcium second messenger system. In Xenopus laevis (African clawed frog), this protein is Endothelin-3 receptor.